The chain runs to 443 residues: UDP-N-acetylmuramoylalanine--D-glutamate ligase (443 aa).

ATP is bound at residue 116–122; sequence GTNGKST.

Belongs to the MurCDEF family.

It is found in the cytoplasm. The enzyme catalyses UDP-N-acetyl-alpha-D-muramoyl-L-alanine + D-glutamate + ATP = UDP-N-acetyl-alpha-D-muramoyl-L-alanyl-D-glutamate + ADP + phosphate + H(+). Its pathway is cell wall biogenesis; peptidoglycan biosynthesis. Cell wall formation. Catalyzes the addition of glutamate to the nucleotide precursor UDP-N-acetylmuramoyl-L-alanine (UMA). In Novosphingobium aromaticivorans (strain ATCC 700278 / DSM 12444 / CCUG 56034 / CIP 105152 / NBRC 16084 / F199), this protein is UDP-N-acetylmuramoylalanine--D-glutamate ligase.